A 212-amino-acid chain; its full sequence is Ropporin-1 (212 aa).

Positions 12-49 (PELPKMLKEFAKAAIRAQPQDLIQWGADYFEALSRGET) constitute an RIIa domain. Ser-56 carries the phosphoserine modification. Residues 209 to 212 (VWLE) form an interaction with RHPN1 region.

This sequence belongs to the ropporin family. Homodimer. Interacts with AKAP3. May interact with SPA17. Interacts with RHPN1. Interacts with FSCB; the interaction increases upon spermatozoa capacitation conditions. Interacts with CFAP61. Post-translationally, sumoylated, sumoylation decreases upon spermatozoa capacitation conditions.

Its subcellular location is the cell projection. It is found in the cilium. The protein localises to the flagellum. Important for male fertility. With ROPN1L, involved in fibrous sheath integrity and sperm motility, plays a role in PKA-dependent signaling processes required for spermatozoa capacitation. This chain is Ropporin-1 (ROPN1), found in Macaca fascicularis (Crab-eating macaque).